A 163-amino-acid polypeptide reads, in one-letter code: MPSFDIVSEIDMQEVRNAVENATRDLSTRWDFRNVPASFELNEKSQSIKVASESDFQVQQLVDILREKLVKRGIEGGALEIPEEMEHSGKTYSVEAKLKQGIETTLAKQLIKLIKDSKLKVQAQIQGEQVRVTGKARDDLQGVMALIRGGNLGQPFQFTNFRD.

Belongs to the YajQ family.

Functionally, nucleotide-binding protein. The protein is Nucleotide-binding protein ECA1137 of Pectobacterium atrosepticum (strain SCRI 1043 / ATCC BAA-672) (Erwinia carotovora subsp. atroseptica).